Consider the following 322-residue polypeptide: 4-diphosphocytidyl-2-C-methyl-D-erythritol kinase (322 aa).

Residue Lys25 is part of the active site. 110-120 (PVAGGMAGGSA) contributes to the ATP binding site. Asp152 is an active-site residue.

Belongs to the GHMP kinase family. IspE subfamily.

The enzyme catalyses 4-CDP-2-C-methyl-D-erythritol + ATP = 4-CDP-2-C-methyl-D-erythritol 2-phosphate + ADP + H(+). Its pathway is isoprenoid biosynthesis; isopentenyl diphosphate biosynthesis via DXP pathway; isopentenyl diphosphate from 1-deoxy-D-xylulose 5-phosphate: step 3/6. Its function is as follows. Catalyzes the phosphorylation of the position 2 hydroxy group of 4-diphosphocytidyl-2C-methyl-D-erythritol. The sequence is that of 4-diphosphocytidyl-2-C-methyl-D-erythritol kinase from Mycolicibacterium vanbaalenii (strain DSM 7251 / JCM 13017 / BCRC 16820 / KCTC 9966 / NRRL B-24157 / PYR-1) (Mycobacterium vanbaalenii).